A 101-amino-acid chain; its full sequence is Integration host factor subunit alpha (101 aa).

This sequence belongs to the bacterial histone-like protein family. Heterodimer of an alpha and a beta chain.

Functionally, this protein is one of the two subunits of integration host factor, a specific DNA-binding protein that functions in genetic recombination as well as in transcriptional and translational control. The chain is Integration host factor subunit alpha from Maricaulis maris (strain MCS10) (Caulobacter maris).